A 665-amino-acid chain; its full sequence is DNA ligase (665 aa).

NAD(+) contacts are provided by residues 32–36 (DSEYD), 81–82 (SL), and Glu110. The active-site N6-AMP-lysine intermediate is Lys112. NAD(+) contacts are provided by Arg133, Glu167, Lys283, and Lys307. Cys401, Cys404, Cys419, and Cys424 together coordinate Zn(2+). Positions 586–665 (EGHPDFSGKT…AAFIEKQNGI (80 aa)) constitute a BRCT domain.

It belongs to the NAD-dependent DNA ligase family. LigA subfamily. Mg(2+) serves as cofactor. It depends on Mn(2+) as a cofactor.

The catalysed reaction is NAD(+) + (deoxyribonucleotide)n-3'-hydroxyl + 5'-phospho-(deoxyribonucleotide)m = (deoxyribonucleotide)n+m + AMP + beta-nicotinamide D-nucleotide.. DNA ligase that catalyzes the formation of phosphodiester linkages between 5'-phosphoryl and 3'-hydroxyl groups in double-stranded DNA using NAD as a coenzyme and as the energy source for the reaction. It is essential for DNA replication and repair of damaged DNA. This is DNA ligase from Staphylococcus epidermidis (strain ATCC 12228 / FDA PCI 1200).